Reading from the N-terminus, the 310-residue chain is tRNA dimethylallyltransferase (310 aa).

Residue 13 to 20 participates in ATP binding; sequence GPTASGKT. 15-20 serves as a coordination point for substrate; it reads TASGKT. Interaction with substrate tRNA stretches follow at residues 38 to 41, 162 to 166, 243 to 248, and 276 to 283; these read DSAL, QRLSR, RCVGYR, and KRQITWLR.

This sequence belongs to the IPP transferase family. As to quaternary structure, monomer. Mg(2+) is required as a cofactor.

The enzyme catalyses adenosine(37) in tRNA + dimethylallyl diphosphate = N(6)-dimethylallyladenosine(37) in tRNA + diphosphate. Functionally, catalyzes the transfer of a dimethylallyl group onto the adenine at position 37 in tRNAs that read codons beginning with uridine, leading to the formation of N6-(dimethylallyl)adenosine (i(6)A). This chain is tRNA dimethylallyltransferase, found in Vibrio atlanticus (strain LGP32) (Vibrio splendidus (strain Mel32)).